A 163-amino-acid polypeptide reads, in one-letter code: Phosphopantetheine adenylyltransferase (163 aa).

Thr-10 lines the substrate pocket. ATP is bound by residues 10–11 (TF) and His-18. 3 residues coordinate substrate: Lys-42, Leu-74, and Arg-88. ATP contacts are provided by residues 89–91 (GLR), Glu-99, and 124–130 (NSFISST).

This sequence belongs to the bacterial CoaD family. In terms of assembly, homohexamer. Mg(2+) is required as a cofactor.

The protein localises to the cytoplasm. It catalyses the reaction (R)-4'-phosphopantetheine + ATP + H(+) = 3'-dephospho-CoA + diphosphate. The protein operates within cofactor biosynthesis; coenzyme A biosynthesis; CoA from (R)-pantothenate: step 4/5. Functionally, reversibly transfers an adenylyl group from ATP to 4'-phosphopantetheine, yielding dephospho-CoA (dPCoA) and pyrophosphate. This chain is Phosphopantetheine adenylyltransferase, found in Shewanella baltica (strain OS195).